The following is a 142-amino-acid chain: Succinate dehydrogenase assembly factor 2, mitochondrial (142 aa).

This sequence belongs to the SDHAF2 family. In terms of assembly, interacts with the flavoprotein subunit within the SDH catalytic dimer.

The protein localises to the mitochondrion matrix. Its function is as follows. Plays an essential role in the assembly of succinate dehydrogenase (SDH), an enzyme complex (also referred to as respiratory complex II) that is a component of both the tricarboxylic acid (TCA) cycle and the mitochondrial electron transport chain, and which couples the oxidation of succinate to fumarate with the reduction of ubiquinone (coenzyme Q) to ubiquinol. Required for flavinylation (covalent attachment of FAD) of the flavoprotein subunit of the SDH catalytic dimer. The polypeptide is Succinate dehydrogenase assembly factor 2, mitochondrial (Debaryomyces hansenii (strain ATCC 36239 / CBS 767 / BCRC 21394 / JCM 1990 / NBRC 0083 / IGC 2968) (Yeast)).